Consider the following 142-residue polypeptide: Virulence-associated membrane protein 1 (142 aa).

Positions 1–20 are cleaved as a signal peptide; sequence MRGILVALTAALIFCSLTPA. Residues 59–79 form a helical membrane-spanning segment; it reads IAIAVGTALVTLVSAGVGGML.

As to quaternary structure, monomer.

It is found in the membrane. Its function is as follows. During infection, may play a role in establishing and maintaining biotrophy; the formation of a tight interaction zone between the host and the pathogen. The chain is Virulence-associated membrane protein 1 from Mycosarcoma maydis (Corn smut fungus).